The sequence spans 273 residues: WIMGHMVNAIAQIDEFVNLGANSIETDVSFDSSANPEYTYHGIPCDCGRTCTKWEHFNEFLKGLRKATTPGDSKYHEKLVLVVFDLKTGSLYDNQASDAGKKLAKSLLQNYWNNGNNGGRAYIVLSIPNLAHYKLITGFKEALTSEGHPELMDKVGYDFSGNDDIGDVANAYKKAGVTGHAWQSDGITNCSLRGLDRVRKAVANRDSSNGYINKVYYWTVDKRQSTRDALDAGVDGIMTNYPDVIADVLNESAYKAKFRIASYDDNPWETFKN.

His-5 is a catalytic residue. Mg(2+) contacts are provided by Glu-25 and Asp-27. The active-site Nucleophile is His-41. 2 cysteine pairs are disulfide-bonded: Cys-45–Cys-51 and Cys-47–Cys-190. Position 85 (Asp-85) interacts with Mg(2+). Asn-189 and Asn-250 each carry an N-linked (GlcNAc...) asparagine glycan.

It belongs to the arthropod phospholipase D family. Class II subfamily. Requires Mg(2+) as cofactor. As to expression, expressed by the venom gland.

It is found in the secreted. It carries out the reaction an N-(acyl)-sphingosylphosphocholine = an N-(acyl)-sphingosyl-1,3-cyclic phosphate + choline. The enzyme catalyses an N-(acyl)-sphingosylphosphoethanolamine = an N-(acyl)-sphingosyl-1,3-cyclic phosphate + ethanolamine. The catalysed reaction is a 1-acyl-sn-glycero-3-phosphocholine = a 1-acyl-sn-glycero-2,3-cyclic phosphate + choline. It catalyses the reaction a 1-acyl-sn-glycero-3-phosphoethanolamine = a 1-acyl-sn-glycero-2,3-cyclic phosphate + ethanolamine. In terms of biological role, dermonecrotic toxins cleave the phosphodiester linkage between the phosphate and headgroup of certain phospholipids (sphingolipid and lysolipid substrates), forming an alcohol (often choline) and a cyclic phosphate. This toxin acts on sphingomyelin (SM). It may also act on ceramide phosphoethanolamine (CPE), lysophosphatidylcholine (LPC) and lysophosphatidylethanolamine (LPE), but not on lysophosphatidylserine (LPS), and lysophosphatidylglycerol (LPG). It acts by transphosphatidylation, releasing exclusively cyclic phosphate products as second products. Induces dermonecrosis, hemolysis, increased vascular permeability, edema, inflammatory response, and platelet aggregation. The protein is Dermonecrotic toxin LapSicTox-alphaIB1bi of Loxosceles apachea (Apache recluse spider).